A 364-amino-acid polypeptide reads, in one-letter code: 3-dehydroquinate synthase (364 aa).

NAD(+) contacts are provided by residues 73–78 (DGEQNK), 107–111 (GVIGD), 131–132 (TT), lysine 144, lysine 153, and 171–174 (CLCT). Zn(2+) contacts are provided by glutamate 186, histidine 249, and histidine 266.

This sequence belongs to the sugar phosphate cyclases superfamily. Dehydroquinate synthase family. Requires NAD(+) as cofactor. Co(2+) serves as cofactor. The cofactor is Zn(2+).

The protein localises to the cytoplasm. The enzyme catalyses 7-phospho-2-dehydro-3-deoxy-D-arabino-heptonate = 3-dehydroquinate + phosphate. The protein operates within metabolic intermediate biosynthesis; chorismate biosynthesis; chorismate from D-erythrose 4-phosphate and phosphoenolpyruvate: step 2/7. Its function is as follows. Catalyzes the conversion of 3-deoxy-D-arabino-heptulosonate 7-phosphate (DAHP) to dehydroquinate (DHQ). This is 3-dehydroquinate synthase from Blochmanniella floridana.